The primary structure comprises 188 residues: Large ribosomal subunit protein eL18 (188 aa).

A Glycyl lysine isopeptide (Lys-Gly) (interchain with G-Cter in SUMO2) cross-link involves residue Lys-119. Ser-130 is subject to Phosphoserine. Residues 151–188 are disordered; sequence HFGKAPGTPHSHTKPYVRSKGRKFERARGRRASRGYKN. Thr-158 carries the phosphothreonine modification. 2 stretches are compositionally biased toward basic residues: residues 161–171 and 178–188; these read SHTKPYVRSKG and RGRRASRGYKN. Lys-164 is covalently cross-linked (Glycyl lysine isopeptide (Lys-Gly) (interchain with G-Cter in SUMO2)).

The protein belongs to the eukaryotic ribosomal protein eL18 family. In terms of assembly, component of the large ribosomal subunit.

Its subcellular location is the cytoplasm. The protein resides in the cytosol. It localises to the rough endoplasmic reticulum. In terms of biological role, component of the large ribosomal subunit. The ribosome is a large ribonucleoprotein complex responsible for the synthesis of proteins in the cell. This is Large ribosomal subunit protein eL18 (RPL18) from Canis lupus familiaris (Dog).